The primary structure comprises 95 residues: Co-chaperonin GroES (95 aa).

It belongs to the GroES chaperonin family. As to quaternary structure, heptamer of 7 subunits arranged in a ring. Interacts with the chaperonin GroEL.

The protein resides in the cytoplasm. In terms of biological role, together with the chaperonin GroEL, plays an essential role in assisting protein folding. The GroEL-GroES system forms a nano-cage that allows encapsulation of the non-native substrate proteins and provides a physical environment optimized to promote and accelerate protein folding. GroES binds to the apical surface of the GroEL ring, thereby capping the opening of the GroEL channel. This chain is Co-chaperonin GroES, found in Rickettsia felis (strain ATCC VR-1525 / URRWXCal2) (Rickettsia azadi).